The chain runs to 504 residues: Cobyric acid synthase (504 aa).

A GATase cobBQ-type domain is found at 258–454; the sequence is EIEIAIIKLP…LHGIFENDEW (197 aa). The active-site Nucleophile is the Cys339. The active site involves His446.

Belongs to the CobB/CobQ family. CobQ subfamily.

It participates in cofactor biosynthesis; adenosylcobalamin biosynthesis. Catalyzes amidations at positions B, D, E, and G on adenosylcobyrinic A,C-diamide. NH(2) groups are provided by glutamine, and one molecule of ATP is hydrogenolyzed for each amidation. The sequence is that of Cobyric acid synthase from Prochlorococcus marinus (strain NATL2A).